Here is a 229-residue protein sequence, read N- to C-terminus: NAD-dependent protein deacetylase (229 aa).

The Deacetylase sirtuin-type domain maps to 1-229; that stretch reads MNKLNEALKK…SDAVKVFAEI (229 aa). Residues A20, R32, Q96, I98, D99, H114, T181, S182, N205, and V223 each coordinate NAD(+). The nicotinamide site is built by I98 and D99. H114 acts as the Proton acceptor in catalysis.

This sequence belongs to the sirtuin family. Class U subfamily.

It is found in the cytoplasm. It catalyses the reaction N(6)-acetyl-L-lysyl-[protein] + NAD(+) + H2O = 2''-O-acetyl-ADP-D-ribose + nicotinamide + L-lysyl-[protein]. Its function is as follows. NAD-dependent protein deacetylase which modulates the activities of several enzymes which are inactive in their acetylated form. This Listeria monocytogenes serotype 4b (strain F2365) protein is NAD-dependent protein deacetylase.